Reading from the N-terminus, the 185-residue chain is Ribosome-recycling factor (185 aa).

The protein belongs to the RRF family.

The protein localises to the cytoplasm. In terms of biological role, responsible for the release of ribosomes from messenger RNA at the termination of protein biosynthesis. May increase the efficiency of translation by recycling ribosomes from one round of translation to another. In Halothermothrix orenii (strain H 168 / OCM 544 / DSM 9562), this protein is Ribosome-recycling factor.